Reading from the N-terminus, the 190-residue chain is Dynactin subunit 6 (190 aa).

The residue at position 186 (T186) is a Phosphothreonine; by CDK1.

This sequence belongs to the dynactin subunits 5/6 family. Dynactin subunit 6 subfamily. Subunit of dynactin, a multiprotein complex part of a tripartite complex with dynein and a adapter, such as BICDL1, BICD2 or HOOK3. The dynactin complex is built around ACTR1A/ACTB filament and consists of an actin-related filament composed of a shoulder domain, a pointed end and a barbed end. Its length is defined by its flexible shoulder domain. The soulder is composed of 2 DCTN1 subunits, 4 DCTN2 and 2 DCTN3. The 4 DCNT2 (via N-terminus) bind the ACTR1A filament and act as molecular rulers to determine the length. The pointed end is important for binding dynein-dynactin cargo adapters. Consists of 4 subunits: ACTR10, DCNT4, DCTN5 and DCTN6. Within the complex DCTN6 forms a heterodimer with DCTN5. The barbed end is composed of a CAPZA1:CAPZB heterodimers, which binds ACTR1A/ACTB filament and dynactin and stabilizes dynactin. Interacts with PLK1. Interacts with N4BP2L1. Phosphorylation at Thr-186 by CDK1 during mitotic prometaphase creates a binding site for PLK1 that facilitates its recruitment to kinetochores.

It localises to the cytoplasm. The protein resides in the cytoskeleton. The protein localises to the chromosome. Its subcellular location is the centromere. It is found in the kinetochore. In terms of biological role, part of the dynactin complex that activates the molecular motor dynein for ultra-processive transport along microtubules. The sequence is that of Dynactin subunit 6 (DCTN6) from Pongo abelii (Sumatran orangutan).